Consider the following 225-residue polypeptide: Transmembrane protein 225 (225 aa).

Residues 1-8 are Cytoplasmic-facing; that stretch reads MVHVSNRS. The chain crosses the membrane as a helical span at residues 9–29; that stretch reads IQGMNILFSSWAVVLMVMGIT. Residues 30–72 lie on the Extracellular side of the membrane; the sequence is LDKWVELISEDERAKMNHSPWMMCCPALWPEDDLKVVRIMMTS. The helical transmembrane segment at 73–93 threads the bilayer; sequence SLGLSFLLNLILGMKFTYLIP. Residues 94–99 lie on the Cytoplasmic side of the membrane; that stretch reads QNKYIQ. A helical membrane pass occupies residues 100-120; sequence LFTTILSFFSGISLLWALILY. At 121–136 the chain is on the extracellular side; it reads HNKLKQGQSMHFSSYR. Residues 137–157 traverse the membrane as a helical segment; it reads ITWIMYTAYLNVFFLSVCGVL. Residues 158–225 lie on the Cytoplasmic side of the membrane; sequence SLLECKLSTS…VQTRHVTWAL (68 aa). The short motif at 219–223 is the RVxF element; sequence RHVTW.

As to quaternary structure, interacts (via RVxF motif) with PPP1CC.

The protein localises to the cytoplasmic vesicle. The protein resides in the secretory vesicle. It is found in the acrosome membrane. Probably inhibits protein phosphatase 1 (PP1) in sperm via binding to catalytic subunit PPP1CC. In Homo sapiens (Human), this protein is Transmembrane protein 225 (TMEM225).